A 177-amino-acid polypeptide reads, in one-letter code: Large ribosomal subunit protein uL6 (177 aa).

This sequence belongs to the universal ribosomal protein uL6 family. In terms of assembly, part of the 50S ribosomal subunit.

This protein binds to the 23S rRNA, and is important in its secondary structure. It is located near the subunit interface in the base of the L7/L12 stalk, and near the tRNA binding site of the peptidyltransferase center. This Saccharophagus degradans (strain 2-40 / ATCC 43961 / DSM 17024) protein is Large ribosomal subunit protein uL6.